The sequence spans 109 residues: Protein NATD1 (109 aa).

The N-acetyltransferase domain occupies 18-108 (EHDRKRRQFS…PLPQYLERLQ (91 aa)).

The protein belongs to the NATD1 family.

The chain is Protein NATD1 (natd1) from Xenopus tropicalis (Western clawed frog).